We begin with the raw amino-acid sequence, 211 residues long: Late expression factor 7 (211 aa).

Involved in late/very late gene activation. The polypeptide is Late expression factor 7 (LEF-7) (Orgyia pseudotsugata multicapsid polyhedrosis virus (OpMNPV)).